Consider the following 404-residue polypeptide: Argininosuccinate synthase (404 aa).

ATP contacts are provided by residues 12–20 (AYSGGLDTS) and Ala40. The L-citrulline site is built by Tyr92 and Ser97. An ATP-binding site is contributed by Gly122. The L-aspartate site is built by Thr124, Asn128, and Asp129. Asn128 lines the L-citrulline pocket. L-citrulline is bound by residues Arg132, Ser181, Ser190, Glu266, and Tyr278.

Belongs to the argininosuccinate synthase family. Type 1 subfamily. In terms of assembly, homotetramer.

It is found in the cytoplasm. The enzyme catalyses L-citrulline + L-aspartate + ATP = 2-(N(omega)-L-arginino)succinate + AMP + diphosphate + H(+). Its pathway is amino-acid biosynthesis; L-arginine biosynthesis; L-arginine from L-ornithine and carbamoyl phosphate: step 2/3. This Photorhabdus laumondii subsp. laumondii (strain DSM 15139 / CIP 105565 / TT01) (Photorhabdus luminescens subsp. laumondii) protein is Argininosuccinate synthase.